A 111-amino-acid polypeptide reads, in one-letter code: Small ribosomal subunit protein uS17 (111 aa).

It belongs to the universal ribosomal protein uS17 family. As to quaternary structure, part of the 30S ribosomal subunit.

One of the primary rRNA binding proteins, it binds specifically to the 5'-end of 16S ribosomal RNA. In Archaeoglobus fulgidus (strain ATCC 49558 / DSM 4304 / JCM 9628 / NBRC 100126 / VC-16), this protein is Small ribosomal subunit protein uS17.